We begin with the raw amino-acid sequence, 282 residues long: Shikimate dehydrogenase (NADP(+)) (282 aa).

Shikimate contacts are provided by residues 15–17 and T62; that span reads SKS. The active-site Proton acceptor is K66. Positions 87 and 103 each coordinate shikimate. Residues 127–131, 151–156, and M220 contribute to the NADP(+) site; these read GAGGA and NRTHTK. Residue Y222 participates in shikimate binding. NADP(+) is bound at residue G244.

The protein belongs to the shikimate dehydrogenase family. Homodimer.

It catalyses the reaction shikimate + NADP(+) = 3-dehydroshikimate + NADPH + H(+). It participates in metabolic intermediate biosynthesis; chorismate biosynthesis; chorismate from D-erythrose 4-phosphate and phosphoenolpyruvate: step 4/7. Involved in the biosynthesis of the chorismate, which leads to the biosynthesis of aromatic amino acids. Catalyzes the reversible NADPH linked reduction of 3-dehydroshikimate (DHSA) to yield shikimate (SA). This chain is Shikimate dehydrogenase (NADP(+)), found in Shewanella putrefaciens (strain CN-32 / ATCC BAA-453).